A 607-amino-acid polypeptide reads, in one-letter code: Rap1 GTPase-GDP dissociation stimulator 1-A (607 aa).

ARM repeat units lie at residues 79–118 (ELMR…NICY), 170–211 (DSLQ…NLAE), 347–390 (DGNC…NLAI), 391–431 (PVVN…MLID), and 479–519 (SKDV…LIAA).

As to quaternary structure, interacts with ralB. Probably interacts with the post-translationally isoprenylated (geranyl-geranylation) forms of ral proteins. Interacts with both GDP-bound and GTP-bound forms of ralA, but interaction is much stronger with ralA-GDP. In terms of tissue distribution, weakly expressed in adult tissues with highest levels found in spleen, kidney, skin and A6 cells.

It localises to the cytoplasm. The protein localises to the cytosol. The protein resides in the endoplasmic reticulum. It is found in the mitochondrion. Stimulates GDP/GTP exchange reaction of a group of small GTP-binding proteins (G proteins) including Rap1a/Rap1b, RhoA, RhoB and KRas, by stimulating the dissociation of GDP from and the subsequent binding of GTP to each small G protein. The chain is Rap1 GTPase-GDP dissociation stimulator 1-A (rap1gds1-a) from Xenopus laevis (African clawed frog).